Reading from the N-terminus, the 488-residue chain is Facilitated trehalose transporter Tret1-2 homolog (488 aa).

The Cytoplasmic portion of the chain corresponds to 1 to 28 (MKILMRADTHVSYSVPAEGPKANFTFSQ). Residues 29–49 (VLAALSVSLCSLVVGFVSAYT) form a helical membrane-spanning segment. Residues 50–72 (SPALVSMTDRTITSFEVTKDAGS) lie on the Extracellular side of the membrane. A helical transmembrane segment spans residues 73–93 (WVGGIMPLAALAGGITGGPLI). Over 94–105 (EYLGRRTTILAT) the chain is Cytoplasmic. A helical transmembrane segment spans residues 106 to 126 (AVPFIVSSLLIACAVNVIMIL). The Extracellular segment spans residues 127–129 (CGR). A helical membrane pass occupies residues 130-150 (FLTGFCVGIASLSLPVYLGET). The Cytoplasmic portion of the chain corresponds to 151–160 (LQPEVRGTLG). The helical transmembrane segment at 161–181 (LLPTALGNIGILVCYVAGSFM) threads the bilayer. The N-linked (GlcNAc...) asparagine glycan is linked to Asn-182. At 182 to 184 (NWS) the chain is on the extracellular side. Residues 185–205 (MLAFLGAALPVPFLILMIIIP) form a helical membrane-spanning segment. The Cytoplasmic portion of the chain corresponds to 206–268 (ETPRWFVNRG…ELFKRINLKP (63 aa)). The helical transmembrane segment at 269–289 (LSISLGLMFFQQFSGINAVIF) threads the bilayer. At 290 to 305 (YTVQIFKDAGSTIDSN) the chain is on the extracellular side. Residues 306–326 (LCTIIVGIVNFFATFMGILLI) form a helical membrane-spanning segment. At 327–332 (DRLGRK) the chain is on the cytoplasmic side. A helical transmembrane segment spans residues 333 to 353 (ILLYISDIAMILTLSILGGFF). Topologically, residues 354-372 (YCKAHGPDVSHLGWLPLTC) are extracellular. A helical transmembrane segment spans residues 373–393 (FVIYILGFSLGFGPIPWLMMG). The Cytoplasmic portion of the chain corresponds to 394–402 (EILPAKIRG). Residues 403-423 (PAASVVTAFNWFCTFVVTKTF) traverse the membrane as a helical segment. Residues 424-433 (QDLTVAMGAH) are Extracellular-facing. A helical transmembrane segment spans residues 434–454 (GAFWLFGVVCIVGLFFVIICV). Over 455–488 (PETRGKSLEEIERKMMGRVPISAVVNIKPFSFNM) the chain is Cytoplasmic.

The protein belongs to the major facilitator superfamily. Sugar transporter (TC 2.A.1.1) family. Trehalose transporter subfamily.

The protein resides in the cell membrane. Fails to transport trehalose. The chain is Facilitated trehalose transporter Tret1-2 homolog from Drosophila simulans (Fruit fly).